Reading from the N-terminus, the 123-residue chain is Chaperone protein SycN (123 aa).

As to quaternary structure, interacts with YscB to form a complex which specifically binds to YopN.

The protein resides in the cytoplasm. It is found in the cell inner membrane. Its function is as follows. Functions as a specific chaperone for YopN. It could facilitate the secretion and the subsequent translocation of YopN. This is Chaperone protein SycN (sycN) from Yersinia enterocolitica.